Consider the following 330-residue polypeptide: 2-oxoisovalerate dehydrogenase subunit alpha (330 aa).

Residues F44, Y73, 107–110 (MPGH), and S123 contribute to the substrate site. 72 to 74 (YYR) is a binding site for thiamine diphosphate. Thiamine diphosphate is bound by residues 123-125 (SPV), 153-159 (GEGSSNQ), 183-187 (NKYAI), and H252. Mg(2+) is bound by residues E154, N183, and Y185. The interval 249–272 (LTPHSSDDDDSSYRGREEVEEAKK) is disordered. Over residues 259 to 272 (SSYRGREEVEEAKK) the composition is skewed to basic and acidic residues.

The protein belongs to the BCKDHA family. As to quaternary structure, heterotetramer of two alpha and two beta chains. Directly associated with ODBB in the E1 complex. It depends on thiamine diphosphate as a cofactor.

The catalysed reaction is N(6)-[(R)-lipoyl]-L-lysyl-[protein] + 3-methyl-2-oxobutanoate + H(+) = N(6)-[(R)-S(8)-2-methylpropanoyldihydrolipoyl]-L-lysyl-[protein] + CO2. The branched-chain alpha-keto dehydrogenase complex catalyzes the overall conversion of alpha-keto acids to acyl-CoA and CO(2). It contains multiple copies of three enzymatic components: branched-chain alpha-keto acid decarboxylase (E1), lipoamide acyltransferase (E2) and lipoamide dehydrogenase (E3). The chain is 2-oxoisovalerate dehydrogenase subunit alpha (bfmBAA) from Bacillus subtilis (strain 168).